A 322-amino-acid chain; its full sequence is Mitochondrial glutamate carrier 1 (322 aa).

Solcar repeat units follow at residues 6–93, 101–214, and 223–312; these read ISLP…FRYQ, LTLF…LNEL, and SPFY…GIAE. Helical transmembrane passes span 12–32, 62–82, 107–127, 189–209, 223–243, and 292–312; these read LING…IDLA, YFGM…EKAI, MLAG…MEML, GLGA…PLFA, SPFY…AVAV, and ALVI…GIAE.

This sequence belongs to the mitochondrial carrier (TC 2.A.29) family.

It localises to the mitochondrion inner membrane. The catalysed reaction is L-glutamate(in) + H(+)(in) = L-glutamate(out) + H(+)(out). Mitochondrial glutamate/H(+) symporter. Responsible for the transport of glutamate from the cytosol into the mitochondrial matrix with the concomitant import of a proton. Plays a role in the control of glucose-stimulated insulin secretion. The protein is Mitochondrial glutamate carrier 1 (SLC25A22) of Bos taurus (Bovine).